The chain runs to 326 residues: DNA-directed RNA polymerase subunit alpha (326 aa).

Residues 1 to 231 form an alpha N-terminal domain (alpha-NTD) region; the sequence is MQTALLKPKI…DQLSVFAALE (231 aa). Residues 247 to 326 are alpha C-terminal domain (alpha-CTD); that stretch reads IDPILLRPVD…ENWPPAGLDK (80 aa).

It belongs to the RNA polymerase alpha chain family. As to quaternary structure, homodimer. The RNAP catalytic core consists of 2 alpha, 1 beta, 1 beta' and 1 omega subunit. When a sigma factor is associated with the core the holoenzyme is formed, which can initiate transcription.

It carries out the reaction RNA(n) + a ribonucleoside 5'-triphosphate = RNA(n+1) + diphosphate. DNA-dependent RNA polymerase catalyzes the transcription of DNA into RNA using the four ribonucleoside triphosphates as substrates. The protein is DNA-directed RNA polymerase subunit alpha of Cupriavidus pinatubonensis (strain JMP 134 / LMG 1197) (Cupriavidus necator (strain JMP 134)).